Reading from the N-terminus, the 643-residue chain is Macrolide export ATP-binding/permease protein MacB (643 aa).

The 239-residue stretch at 4 to 242 (IEIKELNRYF…VNNQSKAKSR (239 aa)) folds into the ABC transporter domain. An ATP-binding site is contributed by 40–47 (GQSGSGKS). The next 4 membrane-spanning stretches (helical) occupy residues 269–289 (LLTMLGIIIGITSVVSVVALG), 523–543 (IAFISLIVGGIGVMNIMLVSV), 572–592 (ILICMIGGISGIMLSLIIGGI), and 603–623 (VFSTFSIVAAVLCSTLIGVIF).

This sequence belongs to the ABC transporter superfamily. Macrolide exporter (TC 3.A.1.122) family. Homodimer. Part of the tripartite efflux system MacAB-TolC, which is composed of an inner membrane transporter, MacB, a periplasmic membrane fusion protein, MacA, and an outer membrane component, TolC. The complex forms a large protein conduit and can translocate molecules across both the inner and outer membranes. Interacts with MacA.

The protein localises to the cell inner membrane. Functionally, part of the tripartite efflux system MacAB-TolC. MacB is a non-canonical ABC transporter that contains transmembrane domains (TMD), which form a pore in the inner membrane, and an ATP-binding domain (NBD), which is responsible for energy generation. Confers resistance against macrolides. This chain is Macrolide export ATP-binding/permease protein MacB, found in Mannheimia succiniciproducens (strain KCTC 0769BP / MBEL55E).